Here is a 160-residue protein sequence, read N- to C-terminus: MGKSHGYRSRTRYMFQRDFRKHGAVHLSTYLKVYKVGDIVDIKANGSIQKGMPHKFYQGKTGVVYNVTKSSVGVIINKMVGNRYLEKRLNLRVEHIKHSKCRQEFLERVKANAAKRAEAKAQGVAVQLKRQPAQPRESRIVSTEGNVPQTLAPVPYETFI.

K32 is covalently cross-linked (Glycyl lysine isopeptide (Lys-Gly) (interchain with G-Cter in ubiquitin)).

This sequence belongs to the eukaryotic ribosomal protein eL21 family. Component of the large ribosomal subunit (LSU). Mature yeast ribosomes consist of a small (40S) and a large (60S) subunit. The 40S small subunit contains 1 molecule of ribosomal RNA (18S rRNA) and 33 different proteins (encoded by 57 genes). The large 60S subunit contains 3 rRNA molecules (25S, 5.8S and 5S rRNA) and 46 different proteins (encoded by 81 genes).

The protein resides in the cytoplasm. In terms of biological role, component of the ribosome, a large ribonucleoprotein complex responsible for the synthesis of proteins in the cell. The small ribosomal subunit (SSU) binds messenger RNAs (mRNAs) and translates the encoded message by selecting cognate aminoacyl-transfer RNA (tRNA) molecules. The large subunit (LSU) contains the ribosomal catalytic site termed the peptidyl transferase center (PTC), which catalyzes the formation of peptide bonds, thereby polymerizing the amino acids delivered by tRNAs into a polypeptide chain. The nascent polypeptides leave the ribosome through a tunnel in the LSU and interact with protein factors that function in enzymatic processing, targeting, and the membrane insertion of nascent chains at the exit of the ribosomal tunnel. This is Large ribosomal subunit protein eL21A from Saccharomyces cerevisiae (strain ATCC 204508 / S288c) (Baker's yeast).